The primary structure comprises 314 residues: tRNA pseudouridine synthase B (314 aa).

The Nucleophile role is filled by D41.

Belongs to the pseudouridine synthase TruB family. Type 1 subfamily.

It catalyses the reaction uridine(55) in tRNA = pseudouridine(55) in tRNA. Its function is as follows. Responsible for synthesis of pseudouridine from uracil-55 in the psi GC loop of transfer RNAs. This is tRNA pseudouridine synthase B from Prochlorococcus marinus (strain NATL2A).